A 104-amino-acid chain; its full sequence is L-rhamnose mutarotase (104 aa).

Tyr-18 contributes to the substrate binding site. His-22 acts as the Proton donor in catalysis. Residues Tyr-41 and 76–77 each bind substrate; that span reads WW.

The protein belongs to the rhamnose mutarotase family. As to quaternary structure, homodimer.

It is found in the cytoplasm. It carries out the reaction alpha-L-rhamnose = beta-L-rhamnose. It participates in carbohydrate metabolism; L-rhamnose metabolism. In terms of biological role, involved in the anomeric conversion of L-rhamnose. In Klebsiella pneumoniae subsp. pneumoniae (strain ATCC 700721 / MGH 78578), this protein is L-rhamnose mutarotase.